The following is a 399-amino-acid chain: Acetylornithine aminotransferase (399 aa).

Residues 99–100 and F132 contribute to the pyridoxal 5'-phosphate site; that span reads GA. Residue R135 coordinates N(2)-acetyl-L-ornithine. 217-220 is a pyridoxal 5'-phosphate binding site; sequence DEVQ. K246 is subject to N6-(pyridoxal phosphate)lysine. T274 contributes to the N(2)-acetyl-L-ornithine binding site. T275 contacts pyridoxal 5'-phosphate.

It belongs to the class-III pyridoxal-phosphate-dependent aminotransferase family. ArgD subfamily. As to quaternary structure, homodimer. Pyridoxal 5'-phosphate is required as a cofactor.

It localises to the cytoplasm. The catalysed reaction is N(2)-acetyl-L-ornithine + 2-oxoglutarate = N-acetyl-L-glutamate 5-semialdehyde + L-glutamate. It functions in the pathway amino-acid biosynthesis; L-arginine biosynthesis; N(2)-acetyl-L-ornithine from L-glutamate: step 4/4. This chain is Acetylornithine aminotransferase, found in Agrobacterium fabrum (strain C58 / ATCC 33970) (Agrobacterium tumefaciens (strain C58)).